The primary structure comprises 166 residues: CDP-archaeol synthase (166 aa).

5 consecutive transmembrane segments (helical) span residues 7–27, 55–75, 78–98, 116–136, and 138–158; these read LLLS…GPFI, LIVA…FFTA, TLIS…GAFI, LDFV…ITWY, and FLFI…VAYL.

It belongs to the CDP-archaeol synthase family. The cofactor is Mg(2+).

The protein localises to the cell membrane. It carries out the reaction 2,3-bis-O-(geranylgeranyl)-sn-glycerol 1-phosphate + CTP + H(+) = CDP-2,3-bis-O-(geranylgeranyl)-sn-glycerol + diphosphate. Its pathway is membrane lipid metabolism; glycerophospholipid metabolism. In terms of biological role, catalyzes the formation of CDP-2,3-bis-(O-geranylgeranyl)-sn-glycerol (CDP-archaeol) from 2,3-bis-(O-geranylgeranyl)-sn-glycerol 1-phosphate (DGGGP) and CTP. This reaction is the third ether-bond-formation step in the biosynthesis of archaeal membrane lipids. In Saccharolobus islandicus (strain Y.N.15.51 / Yellowstone #2) (Sulfolobus islandicus), this protein is CDP-archaeol synthase.